We begin with the raw amino-acid sequence, 365 residues long: MLSRRRVFAVERLGGRDGAFEDLAQGCVVPGVTCTYRRIPDNTHECSLDFREGQNELRGLERQMPLLKLASQDSGMEMVVGDSSLATLSGLSQDSLNLEPMGSPELPPAQLDRLLARQKLEEVLERSREFPSLSAQRGPLQLLNKPVDGVPIFAGEQESTEADTELEAGLEEAKEVGNMESAACTCLPGQGLRYLEHLCLVLEQMVRLQQLYLQLQTQRPSRDPEEEVLAPALSSSHIPDNRVQEHREELSQTKDPEGAEAASLPEVGVLVTSPSRLPEALLEPTHILPPSQEPKDLSHWDKVKVLLNRLRWRSPRLPEPPVPPDGSGSRMEFRNLSDRTPCHSQRKTFIPALVVKKPRAKNLSV.

2 disordered regions span residues 218–262 (QRPS…AEAA) and 315–342 (PRLPEPPVPPDGSGSRMEFRNLSDRTPC). Basic and acidic residues-rich tracts occupy residues 239–257 (PDNRVQEHREELSQTKDPE) and 331–341 (MEFRNLSDRTP).

This is an uncharacterized protein from Mus musculus (Mouse).